Reading from the N-terminus, the 103-residue chain is Cyclotide vibi-I (103 aa).

An N-terminal signal peptide occupies residues 1-9; it reads AAFALPAFA. The propeptide occupies 10–69; sequence SFEKDVITPAALEAVLNRKAPLSNIMMENDAILNVIANVKTVISNPVLEEALLKTNHGVN. Positions 70 to 99 form a cross-link, cyclopeptide (Gly-Asn); that stretch reads GIPCGESCVWIPCLTSTVGCSCKSKVCYRN. 3 cysteine pairs are disulfide-bonded: cysteine 73–cysteine 89, cysteine 77–cysteine 91, and cysteine 82–cysteine 96. Positions 100-103 are excised as a propeptide; the sequence is SLDN.

This is a cyclic peptide.

Its function is as follows. Probably participates in a plant defense mechanism. The chain is Cyclotide vibi-I from Viola biflora (Yellow wood violet).